We begin with the raw amino-acid sequence, 874 residues long: Probable inorganic carbon transporter subunit DabA (874 aa).

4 residues coordinate Zn(2+): cysteine 398, aspartate 400, histidine 580, and cysteine 595.

Belongs to the inorganic carbon transporter (TC 9.A.2) DabA family. In terms of assembly, forms a complex with DabB. The cofactor is Zn(2+).

It localises to the cell membrane. In terms of biological role, part of an energy-coupled inorganic carbon pump. This chain is Probable inorganic carbon transporter subunit DabA, found in Bacillus cereus (strain AH820).